Here is a 597-residue protein sequence, read N- to C-terminus: Cysteine/serine-rich nuclear protein 3 (597 aa).

2 disordered regions span residues 22-64 and 348-407; these read EDVD…TPSS and CQGD…GFVE. The span at 42–52 shows a compositional bias: low complexity; sequence SSESADSGDSV. The segment covering 53-64 has biased composition (polar residues); it reads NPSTSNHFTPSS. Positions 348–359 are enriched in acidic residues; the sequence is CQGDEEEEEEDG. Polar residues predominate over residues 361–376; that stretch reads SFCSGATDSSTQSLAP. Residues 378–401 are compositionally biased toward acidic residues; sequence ESDEEEEEEEEEEEEEEEDDDDDK.

It belongs to the AXUD1 family. Detected only in the brain of 15 dpc, 18 dpc, newborn and P6 mice (at protein level).

It is found in the nucleus. Functionally, binds to the consensus sequence 5'-AGAGTG-3' and has transcriptional activator activity. Plays a role in apoptosis. In Mus musculus (Mouse), this protein is Cysteine/serine-rich nuclear protein 3 (Csrnp3).